We begin with the raw amino-acid sequence, 695 residues long: Protein arginine N-methyltransferase 7 (695 aa).

2 consecutive SAM-dependent MTase PRMT-type domains span residues serine 14–tryptophan 345 and arginine 358–aspartate 684. Arginine 32 is modified (omega-N-methylarginine). Catalysis depends on residues glutamate 144 and glutamate 153.

This sequence belongs to the class I-like SAM-binding methyltransferase superfamily. Protein arginine N-methyltransferase family. PRMT7 subfamily. As to quaternary structure, homodimer and heterodimer. Interacts with CTCFL, PRMT5 and SNRPD3.

The protein resides in the cytoplasm. It is found in the cytosol. The protein localises to the nucleus. It carries out the reaction L-arginyl-[protein] + S-adenosyl-L-methionine = N(omega)-methyl-L-arginyl-[protein] + S-adenosyl-L-homocysteine + H(+). Functionally, arginine methyltransferase that can both catalyze the formation of omega-N monomethylarginine (MMA) and symmetrical dimethylarginine (sDMA), with a preference for the formation of MMA. Specifically mediates the symmetrical dimethylation of arginine residues in the small nuclear ribonucleoproteins Sm D1 (SNRPD1) and Sm D3 (SNRPD3); such methylation being required for the assembly and biogenesis of snRNP core particles. Specifically mediates the symmetric dimethylation of histone H4 'Arg-3' to form H4R3me2s. Plays a role in gene imprinting by being recruited by CTCFL at the H19 imprinted control region (ICR) and methylating histone H4 to form H4R3me2s, possibly leading to recruit DNA methyltransferases at these sites. May also play a role in embryonic stem cell (ESC) pluripotency. Also able to mediate the arginine methylation of histone H2A and myelin basic protein (MBP) in vitro; the relevance of such results is however unclear in vivo. This is Protein arginine N-methyltransferase 7 (PRMT7) from Bos taurus (Bovine).